The sequence spans 731 residues: Golgin subfamily A member 5 (731 aa).

Ser-2 is modified (N-acetylserine). Over 2 to 698 (SWFVDLAGKA…IFLRRYPIAR (697 aa)) the chain is Cytoplasmic. A Dimethylated arginine modification is found at Arg-89. A disordered region spans residues 93 to 222 (EASHPVENAS…PTPNDDGKSH (130 aa)). Phosphoserine is present on Ser-116. Basic and acidic residues predominate over residues 134 to 146 (PTGRVEIRKEKGK). The segment covering 147-167 (TPVFQSSQTSSVSSVNPSVTT) has biased composition (low complexity). The segment covering 173–188 (ENSFGSQTHEAASNSD) has biased composition (polar residues). The segment covering 189–199 (SSHEGQEESSK) has biased composition (basic and acidic residues). A coiled-coil region spans residues 216–632 (NDDGKSHELS…EQQMNSASGS (417 aa)). The helical; Anchor for type IV membrane protein transmembrane segment at 699–719 (VFVIIYMALLHLWVMIVLLTY) threads the bilayer. Residues 720 to 731 (TPEMHHDQPYGK) are Lumenal-facing.

Homodimer. Interacts with RAB1A that has been activated by GTP-binding, and possibly also with OCRL1. Interacts with isoform CASP of CUX1. In terms of processing, highly phosphorylated during mitosis. Phosphorylation is barely detectable during interphase. Ubiquitous. Highly expressed in seminiferous tubules and Leydig cells in testis, and detected at much lower levels in the other tissues tested. Expression is very low or not detectable in spermatozoa.

Its subcellular location is the golgi apparatus membrane. Involved in maintaining Golgi structure. Stimulates the formation of Golgi stacks and ribbons. Involved in intra-Golgi retrograde transport. The polypeptide is Golgin subfamily A member 5 (GOLGA5) (Homo sapiens (Human)).